The sequence spans 216 residues: Large ribosomal subunit protein uL3 (216 aa).

The interval 135–156 (LGASHGTQRKHRSPGSIGGCAT) is disordered.

Belongs to the universal ribosomal protein uL3 family. Part of the 50S ribosomal subunit. Forms a cluster with proteins L14 and L19.

Its function is as follows. One of the primary rRNA binding proteins, it binds directly near the 3'-end of the 23S rRNA, where it nucleates assembly of the 50S subunit. This Thermobifida fusca (strain YX) protein is Large ribosomal subunit protein uL3.